The following is a 424-amino-acid chain: GTPase Obg (424 aa).

The Obg domain occupies 1–158 (MFIDTAKIFV…RWIKLELKLL (158 aa)). The 173-residue stretch at 159 to 331 (ADVGLIGFPN…LMKEAARLLS (173 aa)) folds into the OBG-type G domain. GTP is bound by residues 165–172 (GFPNVGKS), 190–194 (FTTLK), 212–215 (DIPG), 282–285 (NKSD), and 312–314 (SAA). Residues Ser172 and Thr192 each coordinate Mg(2+). The OCT domain occupies 345–424 (RFIEEEKRFT…LNDFEFDFLL (80 aa)).

The protein belongs to the TRAFAC class OBG-HflX-like GTPase superfamily. OBG GTPase family. In terms of assembly, monomer. It depends on Mg(2+) as a cofactor.

The protein localises to the cytoplasm. Functionally, an essential GTPase which binds GTP, GDP and possibly (p)ppGpp with moderate affinity, with high nucleotide exchange rates and a fairly low GTP hydrolysis rate. Plays a role in control of the cell cycle, stress response, ribosome biogenesis and in those bacteria that undergo differentiation, in morphogenesis control. The sequence is that of GTPase Obg from Clostridium botulinum (strain Okra / Type B1).